A 390-amino-acid polypeptide reads, in one-letter code: Protein dimmed (390 aa).

Residues 24-163 (HNNNNYNTDG…RNMRRLESNE (140 aa)) form a disordered region. 2 stretches are compositionally biased toward polar residues: residues 29-44 (YNTD…SAEG) and 55-64 (RTSQLSNNTY). The N-linked (GlcNAc...) asparagine glycan is linked to N61. The span at 69-78 (TDSSSQSDDT) shows a compositional bias: low complexity. Gly residues predominate over residues 79 to 90 (SGGGGSSNGGGS). A compositionally biased stretch (low complexity) spans 122-141 (PSTIAPNSTSSNSSNANGNA). Residues N128, N133, and N140 are each glycosylated (N-linked (GlcNAc...) asparagine). Positions 151–163 (AKERNMRRLESNE) are enriched in basic and acidic residues. Positions 156-208 (MRRLESNERERMRMHSLNDAFQSLREVIPHVEMERRLSKIETLTLAKNYIINL) constitute a bHLH domain. N207 and N237 each carry an N-linked (GlcNAc...) asparagine glycan. The segment at 312–339 (QQQQASHLPHHQQAMHGHGHLGASIQSQ) is disordered. A glycan (N-linked (GlcNAc...) asparagine) is linked at N347.

As to quaternary structure, forms homodimers via the bHLH domain. These dimers bind the core E-box sequence. In terms of tissue distribution, detected in the developing nervous system in the bilateral domains in the cephalic region that later on forms part of the ring gland. Concomitantly expressed in the larval central nervous system (CNS), including the dorsal chain neurons as well as several bilateral clusters of neurons: large, midline protocerebral brain cells (MC), lateral protocerebral brain cells (LC), ventral subesophageal neurons (SE) and lateral abdominal neurons, and the transverse nerves. Outside the CNS, detected in at least three classes of endocrine cells: intrinsic cells of the corpora cardiaca, midgut cells, the Inka cells, lateral Bipolar neurons associated with the segmental transverse nerve, and several peptidergic cells of the enteric nervous system. Expressed only in central and peripheral neuroendocrine secretory cells and neurosecretory neurons but not in sensory or motor neurons.

The protein localises to the cytoplasm. Its function is as follows. Transcription factor that regulates neurosecretory (NS) cell function and neuroendocrine cell fate. Acts as a master regulator of common NS functions such as Phm expression and neuropeptide production. Plays a role as a regulator of peptide-containing large dense-core vesicle (LDCV) production and peptidergic cell differentiation. Controls transcription of FMRFamide in Tv neuronal cells and Fur1 in Ap-let cells (Tvb and dorsal apterous cells). Also required for up-regulation of Phm in Tv and Ap-let cells, and expression of three neuropeptide genes, Ms, FMRFamide and Lk. Influences both regulated and constitutive secretory activity in neuroendocrine cells at embryonic and postembryonic level. Loss of function studies show reduced cellular levels of various neuropeptides and neuropeptide biosynthetic enzymes. This chain is Protein dimmed (dimm), found in Drosophila melanogaster (Fruit fly).